A 520-amino-acid chain; its full sequence is Poly(A)-specific ribonuclease PNLDC1 (520 aa).

Residues D17, E19, D260, and D354 each contribute to the Mg(2+) site. The chain crosses the membrane as a helical span at residues 495-515 (VNCLLQVCGIVTAWALLAFIL).

Belongs to the CAF1 family. It depends on Mg(2+) as a cofactor.

Its subcellular location is the endoplasmic reticulum membrane. It carries out the reaction Exonucleolytic cleavage of poly(A) to 5'-AMP.. In terms of biological role, 3'-exoribonuclease that has a preference for poly(A) tails of mRNAs, thereby efficiently degrading poly(A) tails. Exonucleolytic degradation of the poly(A) tail is often the first step in the decay of eukaryotic mRNAs and is also used to silence certain maternal mRNAs translationally during oocyte maturation and early embryonic development. May act as a regulator of multipotency in embryonic stem cells. Is a critical factor for proper spermatogenesis, involved in pre-piRNAs processing to generate mature piRNAs. In Homo sapiens (Human), this protein is Poly(A)-specific ribonuclease PNLDC1.